Here is a 429-residue protein sequence, read N- to C-terminus: 3-isopropylmalate dehydratase large subunit (429 aa).

3 residues coordinate [4Fe-4S] cluster: cysteine 303, cysteine 363, and cysteine 366.

It belongs to the aconitase/IPM isomerase family. LeuC type 2 subfamily. In terms of assembly, heterodimer of LeuC and LeuD. [4Fe-4S] cluster serves as cofactor.

The enzyme catalyses (2R,3S)-3-isopropylmalate = (2S)-2-isopropylmalate. It participates in amino-acid biosynthesis; L-leucine biosynthesis; L-leucine from 3-methyl-2-oxobutanoate: step 2/4. Functionally, catalyzes the isomerization between 2-isopropylmalate and 3-isopropylmalate, via the formation of 2-isopropylmaleate. The polypeptide is 3-isopropylmalate dehydratase large subunit (Caldicellulosiruptor saccharolyticus (strain ATCC 43494 / DSM 8903 / Tp8T 6331)).